A 515-amino-acid polypeptide reads, in one-letter code: Histone-lysine N-methyltransferase SET5 (515 aa).

The region spanning 114–386 (SKVEIRECEE…KDEELVTTYV (273 aa)) is the SET domain. Residues 452 to 462 (ALQRSNGGSSS) are compositionally biased toward polar residues. Residues 452–476 (ALQRSNGGSSSDLRRKSSIRNRKPD) are disordered.

This sequence belongs to the class V-like SAM-binding methyltransferase superfamily. Histone-lysine methyltransferase family. SET5 subfamily.

The protein localises to the nucleus. The protein resides in the chromosome. It localises to the cytoplasm. It catalyses the reaction L-lysyl-[histone] + S-adenosyl-L-methionine = N(6)-methyl-L-lysyl-[histone] + S-adenosyl-L-homocysteine + H(+). Its function is as follows. Histone methyltransferase that monomethylates 'Lys-5', 'Lys-8' and 'Lys-12' of histone H4 (H4K5me1, H4K8me1 and H4K12me1, respectively), thereby controlling gene expression and remodeling chromatin structures. This Candida glabrata (strain ATCC 2001 / BCRC 20586 / JCM 3761 / NBRC 0622 / NRRL Y-65 / CBS 138) (Yeast) protein is Histone-lysine N-methyltransferase SET5 (SET5).